Consider the following 95-residue polypeptide: Pancreatic polypeptide prohormone (95 aa).

The first 29 residues, 1–29 (MAAARLCLSLLLLSTCVALLLQPLLGAQG), serve as a signal peptide directing secretion. Tyrosine amide is present on Y65. A propeptide spanning residues 89-95 (ELSPLDL) is cleaved from the precursor.

Belongs to the NPY family.

It is found in the secreted. Its function is as follows. Hormone secreted by pancreatic cells that acts as a regulator of pancreatic and gastrointestinal functions probably by signaling through the G protein-coupled receptor NPY4R2. This Homo sapiens (Human) protein is Pancreatic polypeptide prohormone.